The following is a 216-amino-acid chain: 3-keto-L-gulonate-6-phosphate decarboxylase UlaD (216 aa).

Residue aspartate 11 coordinates substrate. 2 residues coordinate Mg(2+): glutamate 33 and aspartate 62. Arginine 192 is a binding site for substrate.

It belongs to the HPS/KGPDC family. KGPDC subfamily. Homodimer. Requires Mg(2+) as cofactor.

It catalyses the reaction 3-dehydro-L-gulonate 6-phosphate + H(+) = L-xylulose 5-phosphate + CO2. It functions in the pathway cofactor degradation; L-ascorbate degradation; D-xylulose 5-phosphate from L-ascorbate: step 2/4. Its function is as follows. Catalyzes the decarboxylation of 3-keto-L-gulonate-6-P into L-xylulose-5-P. Is involved in the anaerobic L-ascorbate utilization. The sequence is that of 3-keto-L-gulonate-6-phosphate decarboxylase UlaD from Salmonella typhi.